Consider the following 480-residue polypeptide: UDP-glucose 6-dehydrogenase 3 (480 aa).

Residues 8–13 (GAGYVG), aspartate 33, arginine 38, 86–90 (VNTPT), 127–128 (ST), and glutamate 161 each bind NAD(+). Residues 157 to 161 (EFLAE), 216 to 223 (KLAANAFL), and 256 to 269 (RIGPKFLNSSVGFG) each bind substrate. Cysteine 272 (nucleophile) is an active-site residue. 272–275 (CFQK) serves as a coordination point for NAD(+). Residue 334–335 (FK) coordinates substrate. Arginine 342 contacts NAD(+). Residue arginine 447 participates in substrate binding.

Belongs to the UDP-glucose/GDP-mannose dehydrogenase family.

The catalysed reaction is UDP-alpha-D-glucose + 2 NAD(+) + H2O = UDP-alpha-D-glucuronate + 2 NADH + 3 H(+). It functions in the pathway nucleotide-sugar biosynthesis; UDP-alpha-D-glucuronate biosynthesis; UDP-alpha-D-glucuronate from UDP-alpha-D-glucose: step 1/1. Inhibited by UDP-xylose. Functionally, involved in the biosynthesis of UDP-glucuronic acid (UDP-GlcA), providing nucleotide sugars for cell-wall polymers. Required for the formation of cell wall ingrowths on the outer cell walls of nematode-induced syncytia. The sequence is that of UDP-glucose 6-dehydrogenase 3 (UGD3) from Arabidopsis thaliana (Mouse-ear cress).